The following is a 405-amino-acid chain: Transposase from transposon Tn916 (405 aa).

Positions 79–163 (GKKMTLCQLY…SLKASFYIAI (85 aa)) constitute a Core-binding (CB) domain. The 207-residue stretch at 186–392 (VPKTVLTEEQ…TFDSAMAEMK (207 aa)) folds into the Tyr recombinase domain. Residues Arg225, Lys264, His343, Arg346, and His369 contribute to the active site. Residue Tyr379 is the O-(3'-phospho-DNA)-tyrosine intermediate of the active site.

It belongs to the 'phage' integrase family.

In Enterococcus faecalis (Streptococcus faecalis), this protein is Transposase from transposon Tn916 (Int-Tn).